The sequence spans 498 residues: ATP synthase subunit beta, chloroplastic (498 aa).

Thr6 is modified (phosphothreonine). The residue at position 13 (Ser13) is a Phosphoserine. 172 to 179 serves as a coordination point for ATP; sequence GGAGVGKT.

Belongs to the ATPase alpha/beta chains family. F-type ATPases have 2 components, CF(1) - the catalytic core - and CF(0) - the membrane proton channel. CF(1) has five subunits: alpha(3), beta(3), gamma(1), delta(1), epsilon(1). CF(0) has four main subunits: a(1), b(1), b'(1) and c(9-12).

Its subcellular location is the plastid. It localises to the chloroplast thylakoid membrane. It catalyses the reaction ATP + H2O + 4 H(+)(in) = ADP + phosphate + 5 H(+)(out). Its function is as follows. Produces ATP from ADP in the presence of a proton gradient across the membrane. The catalytic sites are hosted primarily by the beta subunits. The polypeptide is ATP synthase subunit beta, chloroplastic (Arabis hirsuta (Hairy rock-cress)).